Here is a 335-residue protein sequence, read N- to C-terminus: DNA-directed RNA polymerase subunit alpha (335 aa).

Residues 1–233 (MMLNATEFLT…QQISIFVDLE (233 aa)) are alpha N-terminal domain (alpha-NTD). Residues 247-335 (VDPVLLRPVD…VDDRFSYRSR (89 aa)) form an alpha C-terminal domain (alpha-CTD) region.

It belongs to the RNA polymerase alpha chain family. As to quaternary structure, homodimer. The RNAP catalytic core consists of 2 alpha, 1 beta, 1 beta' and 1 omega subunit. When a sigma factor is associated with the core the holoenzyme is formed, which can initiate transcription.

It catalyses the reaction RNA(n) + a ribonucleoside 5'-triphosphate = RNA(n+1) + diphosphate. DNA-dependent RNA polymerase catalyzes the transcription of DNA into RNA using the four ribonucleoside triphosphates as substrates. The protein is DNA-directed RNA polymerase subunit alpha of Psychrobacter arcticus (strain DSM 17307 / VKM B-2377 / 273-4).